Reading from the N-terminus, the 1205-residue chain is Chromosome partition protein Smc (1205 aa).

An ATP-binding site is contributed by 32–39; that stretch reads PNGSGKSN. Coiled-coil stretches lie at residues 169-288 and 330-499; these read KHRK…SIQH and EELE…GLQR. In terms of domain architecture, SMC hinge spans 514-628; the sequence is GLFGSIAQLV…VNDLTEAMGL (115 aa). Coiled-coil stretches lie at residues 661-771, 802-836, and 979-1033; these read LEVT…AQET, AVRT…RAQQ, and DRVT…KDLL.

The protein belongs to the SMC family. Homodimer.

The protein resides in the cytoplasm. Required for chromosome condensation and partitioning. This Mycobacterium tuberculosis (strain ATCC 25618 / H37Rv) protein is Chromosome partition protein Smc.